We begin with the raw amino-acid sequence, 579 residues long: Solute carrier family 15 member 5 (579 aa).

11 helical membrane-spanning segments follow: residues 77-97, 110-130, 154-174, 191-211, 221-241, 304-324, 343-363, 386-406, 422-442, 472-492, and 509-529; these read CQAA…PVFV, LVYI…VVAF, LFYV…AIVC, SFFN…FLGI, ALVL…LHMI, TFFL…MCIM, GFLL…LILA, CIIA…FFEI, VLTV…LLGV, TLFN…VYLI, and SFFF…CSVS.

It belongs to the major facilitator superfamily. Proton-dependent oligopeptide transporter (POT/PTR) (TC 2.A.17) family.

Its subcellular location is the membrane. Proton oligopeptide cotransporter. The polypeptide is Solute carrier family 15 member 5 (SLC15A5) (Homo sapiens (Human)).